Consider the following 198-residue polypeptide: dTTP/UTP pyrophosphatase (198 aa).

Aspartate 76 serves as the catalytic Proton acceptor.

The protein belongs to the Maf family. YhdE subfamily. It depends on a divalent metal cation as a cofactor.

The protein resides in the cytoplasm. It carries out the reaction dTTP + H2O = dTMP + diphosphate + H(+). The catalysed reaction is UTP + H2O = UMP + diphosphate + H(+). Functionally, nucleoside triphosphate pyrophosphatase that hydrolyzes dTTP and UTP. May have a dual role in cell division arrest and in preventing the incorporation of modified nucleotides into cellular nucleic acids. The protein is dTTP/UTP pyrophosphatase of Shewanella denitrificans (strain OS217 / ATCC BAA-1090 / DSM 15013).